Here is an 82-residue protein sequence, read N- to C-terminus: Small ribosomal subunit protein uS17 (82 aa).

Belongs to the universal ribosomal protein uS17 family. As to quaternary structure, part of the 30S ribosomal subunit.

In terms of biological role, one of the primary rRNA binding proteins, it binds specifically to the 5'-end of 16S ribosomal RNA. This is Small ribosomal subunit protein uS17 from Shewanella amazonensis (strain ATCC BAA-1098 / SB2B).